The primary structure comprises 253 residues: Amino-acid-binding protein AabA (253 aa).

The N-terminal stretch at 1–23 (MPFLKTLFRGALCSIACGASLFC) is a signal peptide.

It belongs to the bacterial solute-binding protein 3 family.

The protein resides in the periplasm. The polypeptide is Amino-acid-binding protein AabA (aabA) (Dichelobacter nodosus (Bacteroides nodosus)).